Reading from the N-terminus, the 455-residue chain is Phosphoglucosamine mutase (455 aa).

Catalysis depends on serine 108, which acts as the Phosphoserine intermediate. Residues serine 108, aspartate 248, aspartate 250, and aspartate 252 each coordinate Mg(2+). Phosphoserine is present on serine 108.

Belongs to the phosphohexose mutase family. The cofactor is Mg(2+). Post-translationally, activated by phosphorylation.

It catalyses the reaction alpha-D-glucosamine 1-phosphate = D-glucosamine 6-phosphate. Catalyzes the conversion of glucosamine-6-phosphate to glucosamine-1-phosphate. The chain is Phosphoglucosamine mutase from Leuconostoc mesenteroides subsp. mesenteroides (strain ATCC 8293 / DSM 20343 / BCRC 11652 / CCM 1803 / JCM 6124 / NCDO 523 / NBRC 100496 / NCIMB 8023 / NCTC 12954 / NRRL B-1118 / 37Y).